We begin with the raw amino-acid sequence, 452 residues long: MKKTLRFAAVVSSLAAASALLAAAPAAAQALGSQGAQLADEVVAVVNNDVITGRELDQRAGLIARRLQQQNAPVPPTDQLRAQVLNQMVLERIQVQKAKDDGIRIDDATVQSTLQRLAQANGMTLEQYRGRLEAQGVPWSVFTSDARTELMLSKLREREVDGKITVSDAEVANYIASQRGPNASQQQDLRFQHIFIKAPTNAPQADIEAAQKKADALLQQAKSGADFEKLAKNNSEANDAKKGGDLGFKAPSALPADVVDAASKLRPGQVNPTLIRVPDGFEIVRLVDRRQSQGATAAAPKIVQTHVRHILLRVGEGKSEGQARQQLADIRNQVEAGGDFAKFARTYSQDGSASQGGDLGWISPGETVPEFERAMNNLQDGQISQPIRTEYGYHLIQVLSRREAEGSVQQQMDIARQAIGQRKAEQAYADWLRELRDSSYVQYKIGGVGPAN.

The signal sequence occupies residues 1–28 (MKKTLRFAAVVSSLAAASALLAAAPAAA). PpiC domains are found at residues 186 to 288 (QQDL…RLVD) and 302 to 400 (IVQT…QVLS).

Its subcellular location is the periplasm. It carries out the reaction [protein]-peptidylproline (omega=180) = [protein]-peptidylproline (omega=0). In terms of biological role, chaperone involved in the correct folding and assembly of outer membrane proteins. Recognizes specific patterns of aromatic residues and the orientation of their side chains, which are found more frequently in integral outer membrane proteins. May act in both early periplasmic and late outer membrane-associated steps of protein maturation. The polypeptide is Chaperone SurA (Burkholderia lata (strain ATCC 17760 / DSM 23089 / LMG 22485 / NCIMB 9086 / R18194 / 383)).